The primary structure comprises 198 residues: Peptidyl-tRNA hydrolase (198 aa).

Y17 provides a ligand contact to tRNA. The Proton acceptor role is filled by H22. Residues Y74, N76, and N122 each contribute to the tRNA site.

This sequence belongs to the PTH family. Monomer.

It localises to the cytoplasm. The catalysed reaction is an N-acyl-L-alpha-aminoacyl-tRNA + H2O = an N-acyl-L-amino acid + a tRNA + H(+). Hydrolyzes ribosome-free peptidyl-tRNAs (with 1 or more amino acids incorporated), which drop off the ribosome during protein synthesis, or as a result of ribosome stalling. Functionally, catalyzes the release of premature peptidyl moieties from peptidyl-tRNA molecules trapped in stalled 50S ribosomal subunits, and thus maintains levels of free tRNAs and 50S ribosomes. This Kineococcus radiotolerans (strain ATCC BAA-149 / DSM 14245 / SRS30216) protein is Peptidyl-tRNA hydrolase.